The sequence spans 355 residues: Uroporphyrinogen decarboxylase (355 aa).

Substrate is bound by residues 23 to 27 (RQAGR), Asp-72, Tyr-148, Ser-203, and His-321.

This sequence belongs to the uroporphyrinogen decarboxylase family. As to quaternary structure, homodimer.

Its subcellular location is the cytoplasm. The catalysed reaction is uroporphyrinogen III + 4 H(+) = coproporphyrinogen III + 4 CO2. Its pathway is porphyrin-containing compound metabolism; protoporphyrin-IX biosynthesis; coproporphyrinogen-III from 5-aminolevulinate: step 4/4. Catalyzes the decarboxylation of four acetate groups of uroporphyrinogen-III to yield coproporphyrinogen-III. The sequence is that of Uroporphyrinogen decarboxylase from Chloroflexus aurantiacus (strain ATCC 29366 / DSM 635 / J-10-fl).